A 317-amino-acid chain; its full sequence is Electron transfer flavoprotein subunit alpha (317 aa).

This sequence belongs to the ETF alpha-subunit/FixB family. Heterodimer of an alpha and a beta subunit. The cofactor is FAD.

Its subcellular location is the cytoplasm. Its pathway is lipid metabolism; butanoate metabolism. Its function is as follows. Part of an electron transfer flavoprotein involved in syntrophic growth of S.wolfei with butyrate. Probably receives electrons from butyryl-CoA dehydrogenases, and transfers them to the membrane-bound quinone oxidoreductase Swol_0698. In Syntrophomonas wolfei subsp. wolfei (strain DSM 2245B / Goettingen), this protein is Electron transfer flavoprotein subunit alpha.